The primary structure comprises 444 residues: MAPDPVAAKTPVQGPTPRYFTWDEVAQRSGCEERWLVIDRKVYDISEFTRRHPGGSRVISHYAGQDATDPFVAFHSNKGLVKKYMNSLLIGELSPEQPSFEPTKNKELTDEFRELRATVEQMGLMKANHVFFLLYLLHILLLDGAAWLTLWIFGTSFLPFLLCAVLLTAAQIQAGWLQHDLGHLSVFSTSKWNHLVHHFVIGHLKGVPASWWNHMHFQHHAKPNCFGKDPDINMHPFFFALGKILSVELGKQKKKYMPYNHQHKYFFLIGPPALVPFFFQWYVFYFVIQRKKWVDLAWMITFYIRLLLTYVPLLGLKAFLGLYFIVRFLESNWFVWVTQMNHIPMHIDHDRNMDWVSTQLQATCNVHKSAFNDWFSGHLNFQIEHHLFPMMPRHNYHKVAPLVQSLCAKHGIEYQSKPLLSAFADIIHSLKESGQLWLDAYLHQ.

Met-1 carries the post-translational modification N-acetylmethionine. The Cytoplasmic portion of the chain corresponds to 1–121; sequence MAPDPVAAKT…FRELRATVEQ (121 aa). Residues 17-94 enclose the Cytochrome b5 heme-binding domain; that stretch reads PRYFTWDEVA…MNSLLIGELS (78 aa). A helical membrane pass occupies residues 122-142; that stretch reads MGLMKANHVFFLLYLLHILLL. The Lumenal segment spans residues 143 to 146; sequence DGAA. The helical transmembrane segment at 147-167 threads the bilayer; it reads WLTLWIFGTSFLPFLLCAVLL. Topologically, residues 168-267 are cytoplasmic; that stretch reads TAAQIQAGWL…PYNHQHKYFF (100 aa). The Histidine box-1 motif lies at 179 to 183; that stretch reads HDLGH. Residues 216-220 carry the Histidine box-2 motif; the sequence is HFQHH. The helical transmembrane segment at 268–288 threads the bilayer; it reads LIGPPALVPFFFQWYVFYFVI. Over 289 to 305 the chain is Lumenal; the sequence is QRKKWVDLAWMITFYIR. Residues 306-326 form a helical membrane-spanning segment; that stretch reads LLLTYVPLLGLKAFLGLYFIV. The Cytoplasmic portion of the chain corresponds to 327–444; that stretch reads RFLESNWFVW…QLWLDAYLHQ (118 aa). The Histidine box-3 signature appears at 382–386; sequence QIEHH.

This sequence belongs to the fatty acid desaturase type 1 family. Widely expressed. Expressed in brain, liver and thymus (at protein level). Isoform 1 seems to be more abundant than isoform 2. Expression of isoform 2 is very low in spleen and not detectable in skeletal muscle.

It is found in the endoplasmic reticulum membrane. The protein resides in the mitochondrion. The catalysed reaction is (8Z,11Z,14Z)-eicosatrienoyl-CoA + 2 Fe(II)-[cytochrome b5] + O2 + 2 H(+) = (5Z,8Z,11Z,14Z)-eicosatetraenoyl-CoA + 2 Fe(III)-[cytochrome b5] + 2 H2O. The enzyme catalyses (8Z,11Z,14Z,17Z)-eicosatetraenoyl-CoA + 2 Fe(II)-[cytochrome b5] + O2 + 2 H(+) = (5Z,8Z,11Z,14Z,17Z)-eicosapentaenoyl-CoA + 2 Fe(III)-[cytochrome b5] + 2 H2O. It catalyses the reaction (11E)-octadecenoyl-CoA + 2 Fe(II)-[cytochrome b5] + O2 + 2 H(+) = (5Z,11E)-octadecadienoyl-CoA + 2 Fe(III)-[cytochrome b5] + 2 H2O. It participates in lipid metabolism; polyunsaturated fatty acid biosynthesis. Acts as a front-end fatty acyl-coenzyme A (CoA) desaturase that introduces a cis double bond at carbon 5 located between a preexisting double bond and the carboxyl end of the fatty acyl chain. Involved in biosynthesis of highly unsaturated fatty acids (HUFA) from the essential polyunsaturated fatty acids (PUFA) linoleic acid (LA) (18:2n-6) and alpha-linolenic acid (ALA) (18:3n-3) precursors. Specifically, desaturates dihomo-gamma-linoleoate (DGLA) (20:3n-6) and eicosatetraenoate (ETA) (20:4n-3) to generate arachidonate (AA) (20:4n-6) and eicosapentaenoate (EPA) (20:5n-3), respectively. As a rate limiting enzyme for DGLA (20:3n-6) and AA (20:4n-6)-derived eicosanoid biosynthesis, controls the metabolism of inflammatory lipids like prostaglandin E2, critical for efficient acute inflammatory response and maintenance of epithelium homeostasis. Contributes to membrane phospholipid biosynthesis by providing AA (20:4n-6) as a major acyl chain esterified into phospholipids. In particular, regulates phosphatidylinositol-4,5-bisphosphate levels, modulating inflammatory cytokine production in T-cells. Also desaturates (11E)-octadecenoate (trans-vaccenoate)(18:1n-9), a metabolite in the biohydrogenation pathway of LA (18:2n-6). Its function is as follows. Does not exhibit any catalytic activity toward 20:3n-6, but it may enhance FADS2 activity. The sequence is that of Acyl-CoA (8-3)-desaturase from Papio anubis (Olive baboon).